A 511-amino-acid polypeptide reads, in one-letter code: Probable mannosyl-oligosaccharide alpha-1,2-mannosidase 1B (511 aa).

A signal peptide spans Met1 to Ala18. Residues Asn90 and Asn177 are each glycosylated (N-linked (GlcNAc...) asparagine). Cys327 and Cys356 form a disulfide bridge. The active-site Proton donor is Glu370. N-linked (GlcNAc...) asparagine glycosylation occurs at Asn433. Residue Thr501 participates in Ca(2+) binding.

It belongs to the glycosyl hydrolase 47 family. Monomer. It depends on Ca(2+) as a cofactor. The cofactor is Mg(2+).

It is found in the cytoplasmic vesicle lumen. The catalysed reaction is N(4)-(alpha-D-Man-(1-&gt;2)-alpha-D-Man-(1-&gt;2)-alpha-D-Man-(1-&gt;3)-[alpha-D-Man-(1-&gt;2)-alpha-D-Man-(1-&gt;3)-[alpha-D-Man-(1-&gt;2)-alpha-D-Man-(1-&gt;6)]-alpha-D-Man-(1-&gt;6)]-beta-D-Man-(1-&gt;4)-beta-D-GlcNAc-(1-&gt;4)-beta-D-GlcNAc)-L-asparaginyl-[protein] (N-glucan mannose isomer 9A1,2,3B1,2,3) + 4 H2O = N(4)-(alpha-D-Man-(1-&gt;3)-[alpha-D-Man-(1-&gt;3)-[alpha-D-Man-(1-&gt;6)]-alpha-D-Man-(1-&gt;6)]-beta-D-Man-(1-&gt;4)-beta-D-GlcNAc-(1-&gt;4)-beta-D-GlcNAc)-L-asparaginyl-[protein] (N-glucan mannose isomer 5A1,2) + 4 beta-D-mannose. It catalyses the reaction N(4)-(alpha-D-Man-(1-&gt;2)-alpha-D-Man-(1-&gt;2)-alpha-D-Man-(1-&gt;3)-[alpha-D-Man-(1-&gt;3)-[alpha-D-Man-(1-&gt;2)-alpha-D-Man-(1-&gt;6)]-alpha-D-Man-(1-&gt;6)]-beta-D-Man-(1-&gt;4)-beta-D-GlcNAc-(1-&gt;4)-beta-D-GlcNAc)-L-asparaginyl-[protein] (N-glucan mannose isomer 8A1,2,3B1,3) + 3 H2O = N(4)-(alpha-D-Man-(1-&gt;3)-[alpha-D-Man-(1-&gt;3)-[alpha-D-Man-(1-&gt;6)]-alpha-D-Man-(1-&gt;6)]-beta-D-Man-(1-&gt;4)-beta-D-GlcNAc-(1-&gt;4)-beta-D-GlcNAc)-L-asparaginyl-[protein] (N-glucan mannose isomer 5A1,2) + 3 beta-D-mannose. The protein operates within protein modification; protein glycosylation. Functionally, involved in the maturation of Asn-linked oligosaccharides. Progressively trims alpha-1,2-linked mannose residues from Man(9)GlcNAc(2) to produce Man(5)GlcNAc(2). This chain is Probable mannosyl-oligosaccharide alpha-1,2-mannosidase 1B (mns1B), found in Aspergillus clavatus (strain ATCC 1007 / CBS 513.65 / DSM 816 / NCTC 3887 / NRRL 1 / QM 1276 / 107).